The primary structure comprises 151 residues: Deoxyuridine 5'-triphosphate nucleotidohydrolase (151 aa).

Substrate-binding positions include 70-72, Asn83, 87-89, and Met97; these read RSG and LID.

The protein belongs to the dUTPase family. Mg(2+) serves as cofactor.

The enzyme catalyses dUTP + H2O = dUMP + diphosphate + H(+). It functions in the pathway pyrimidine metabolism; dUMP biosynthesis; dUMP from dCTP (dUTP route): step 2/2. This enzyme is involved in nucleotide metabolism: it produces dUMP, the immediate precursor of thymidine nucleotides and it decreases the intracellular concentration of dUTP so that uracil cannot be incorporated into DNA. The protein is Deoxyuridine 5'-triphosphate nucleotidohydrolase of Pseudomonas aeruginosa (strain UCBPP-PA14).